The primary structure comprises 350 residues: tRNA uridine(34) hydroxylase (350 aa).

Residues 146–240 enclose the Rhodanese domain; that stretch reads DDPDAVFIDM…YARRAREQGL (95 aa). The Cysteine persulfide intermediate role is filled by C200. The segment covering 319–328 has biased composition (basic and acidic residues); sequence RRRRAGRENG. Positions 319-350 are disordered; that stretch reads RRRRAGRENGNKIFNKSRGRLNSKLSIPDPAE.

This sequence belongs to the TrhO family.

It carries out the reaction uridine(34) in tRNA + AH2 + O2 = 5-hydroxyuridine(34) in tRNA + A + H2O. In terms of biological role, catalyzes oxygen-dependent 5-hydroxyuridine (ho5U) modification at position 34 in tRNAs. In Salmonella dublin (strain CT_02021853), this protein is tRNA uridine(34) hydroxylase.